The chain runs to 122 residues: Large ribosomal subunit protein uL14 (122 aa).

It belongs to the universal ribosomal protein uL14 family. In terms of assembly, part of the 50S ribosomal subunit. Forms a cluster with proteins L3 and L19. In the 70S ribosome, L14 and L19 interact and together make contacts with the 16S rRNA in bridges B5 and B8.

Functionally, binds to 23S rRNA. Forms part of two intersubunit bridges in the 70S ribosome. The polypeptide is Large ribosomal subunit protein uL14 (Chlamydia trachomatis serovar A (strain ATCC VR-571B / DSM 19440 / HAR-13)).